The primary structure comprises 47 residues: Large ribosomal subunit protein bL36B (47 aa).

This sequence belongs to the bacterial ribosomal protein bL36 family.

In Pectobacterium atrosepticum (strain SCRI 1043 / ATCC BAA-672) (Erwinia carotovora subsp. atroseptica), this protein is Large ribosomal subunit protein bL36B.